A 146-amino-acid chain; its full sequence is Putative ankyrin repeat protein FPV224 (146 aa).

ANK repeat units follow at residues 9–38 (SLST…DASI), 42–79 (KGIT…TRDI), 94–126 (YVFV…RIDE), and 127–145 (YYYS…KAVN).

The chain is Putative ankyrin repeat protein FPV224 from Fowlpox virus (strain NVSL) (FPV).